A 614-amino-acid chain; its full sequence is Zinc finger and SCAN domain-containing protein 2 (614 aa).

Disordered stretches follow at residues 1-25 (MAAE…EDEQ), 42-73 (AVLQ…EGPQ), and 162-200 (NISG…RVVP). The SCAN box domain maps to 69–127 (AEGPQGALVRFRELCRRWLRPEVHTKEQMLTVLPREIQAWLQEHRPESSEEAVALVEDL). 14 consecutive C2H2-type zinc fingers follow at residues 222 to 244 (YECP…ERTH), 250 to 272 (YKCD…QTTH), 278 to 300 (YKCR…QRIH), 306 to 328 (FQCA…QRTH), 334 to 356 (YSCP…QGIH), 362 to 384 (YACK…QRIH), 390 to 412 (YKCT…RRTH), 418 to 440 (YQCG…RRTH), 446 to 468 (YKCG…QGTH), 474 to 496 (YECL…QRTH), 502 to 524 (YRCG…QRTH), 530 to 552 (YKCL…QRAH), 558 to 580 (YRCP…QRIH), and 586 to 608 (YRCP…QRTH).

This sequence belongs to the krueppel C2H2-type zinc-finger protein family. In terms of tissue distribution, in the adult, predominantly found in spermatids. Also present in the embryo.

The protein resides in the nucleus. Its function is as follows. May be involved in transcriptional regulation during the post-meiotic stages of spermatogenesis. The chain is Zinc finger and SCAN domain-containing protein 2 (Zscan2) from Mus musculus (Mouse).